The chain runs to 116 residues: Tachykinin-3 (116 aa).

The N-terminal stretch at 1–20 (MRSAMLFAAVLALSLAWTFG) is a signal peptide. Residues 21–79 (AACEEPQEQGGRLSKDSDLSLLPPPLLRRLYDSRSISLEGLLKVLSKASVGPKETSLPQ) constitute a propeptide that is removed on maturation. Methionine 91 bears the Methionine amide mark. The interval 92–116 (GKRNSQPDTPADVVEENTPSFGVLK) is disordered. Positions 95–116 (NSQPDTPADVVEENTPSFGVLK) are excised as a propeptide.

The protein belongs to the tachykinin family.

It localises to the secreted. Tachykinins are active peptides which excite neurons, evoke behavioral responses, are potent vasodilators and secretagogues, and contract (directly or indirectly) many smooth muscles. Is a critical central regulator of gonadal function. In Rattus norvegicus (Rat), this protein is Tachykinin-3 (Tac3).